A 183-amino-acid chain; its full sequence is Ribosome-recycling factor (183 aa).

Belongs to the RRF family.

The protein resides in the cytoplasm. Its function is as follows. Responsible for the release of ribosomes from messenger RNA at the termination of protein biosynthesis. May increase the efficiency of translation by recycling ribosomes from one round of translation to another. In Deinococcus deserti (strain DSM 17065 / CIP 109153 / LMG 22923 / VCD115), this protein is Ribosome-recycling factor.